The primary structure comprises 309 residues: Low density lipoprotein receptor adapter protein 1-B (309 aa).

The region spanning 41-195 is the PID domain; it reads LLEGMLFHLK…SDGEGASSSQ (155 aa). Residues 179–201 form a disordered region; it reads DKREKSGSDGEGASSSQSDGSSS. A compositionally biased stretch (low complexity) spans 189–201; it reads EGASSSQSDGSSS. The Clathrin box signature appears at 213–217; it reads LLDFE. Residues 250–277 form an AP-2 complex binding region; sequence WELDDGLDEAFARLAESRTNPQVLDIGL. A [DE]-X(1,2)-F-X-X-[FL]-X-X-X-R motif motif is present at residues 258 to 267; the sequence is EAFARLAESR.

As to quaternary structure, interacts (via PID domain) with ldlr (via NPXY motif). Binds to soluble clathrin trimers and to the adapter protein complex 2 (AP-2, beta 2 subunit). Binds to phosphoinositides, which regulate clathrin bud assembly at the cell surface. Interacts with the VLDL receptor (vldlr). Interacts with the vitellogenin receptor. Expressed at high level during oogenesis and embryogenesis. Found at low level in the adult liver and spleen. Found at very low level in testis and heart. Not found in the oocyte vegetal cortex.

Its subcellular location is the cytoplasm. Adapter protein (clathrin-associated sorting protein (CLASP)) required for efficient endocytosis of the LDL receptor (LDLR). Also involved in the vitellogenin receptor mediated endocytosis of nutrients during oogenesis. The chain is Low density lipoprotein receptor adapter protein 1-B from Xenopus laevis (African clawed frog).